A 642-amino-acid chain; its full sequence is Zinc finger protein 14 (642 aa).

One can recognise a KRAB domain in the interval 4 to 76 (VSFEDVAVNF…MVERLCESRK (73 aa)). Residues 103–125 (HECSFCGRDFMHHSSLNRHMRSH) form a C2H2-type 1 zinc finger. A C2H2-type 2; degenerate zinc finger spans residues 141 to 163 (RKHKAVEKTFSYHHCFRKHERTH). The segment at 169–191 (YECKQCGKAFIYYQPFQRHERTH) adopts a C2H2-type 3 zinc-finger fold. The segment at 197-217 (YECKQCGKTFIYYQSFQQHAH) adopts a C2H2-type 4; atypical zinc-finger fold. 15 consecutive C2H2-type zinc fingers follow at residues 223 to 245 (YECKQCGKAFICYQSFQRHERTH), 251 to 273 (YECKQCGKAFSCPTYFRTHERTH), 279 to 301 (YKCKECGKAFSFLSSFRRHKRTH), 307 to 329 (YECKECGKAFFYSASFRAHVITH), 335 to 357 (YKCKECGKAFNSSNSCRVHERTH), 363 to 385 (YECKQCGKSFSWSISLRLHERTH), 391 to 413 (YECKQCHKTFSFSSSLREHETTH), 419 to 441 (YECKQCGKTFSFSSSLQRHERTH), 447 to 469 (YECKQCGKAFRCSSYFRIHERSH), 475 to 497 (YECKQCGKVFIRSSSFRLHERTH), 503 to 525 (YECKLCSKTFSFSSSLREHEKIH), 531 to 553 (FECKQCGKAFLRSSQIRLHERTH), 559 to 581 (YQCKQCGKAFISSSKFRMHERTH), 587 to 609 (YRCKQCGKAFRFSSSVRIHERSH), and 615 to 637 (YECKQCGKAFISSSHFRLHERTH).

Belongs to the krueppel C2H2-type zinc-finger protein family.

It is found in the nucleus. May be involved in transcriptional regulation. The chain is Zinc finger protein 14 (ZNF14) from Pongo abelii (Sumatran orangutan).